Here is a 44-residue protein sequence, read N- to C-terminus: Unknown protein 1 (44 aa).

This Lonomia obliqua (Moth) protein is Unknown protein 1.